Reading from the N-terminus, the 637-residue chain is ATP-dependent rRNA helicase SPB4 (637 aa).

The Q motif signature appears at 14-42 (WDTLNPPLSEWIRDAVATMGFDQMTPVQA). Residues 45–247 (LPHFMGNKDV…RVGLRNPVKI (203 aa)) form the Helicase ATP-binding domain. 58 to 65 (AVTGSGKT) lines the ATP pocket. A DEAD box motif is present at residues 195-198 (DEAD). A Helicase C-terminal domain is found at 283–438 (ALAELLRQLP…TITTSEDDAA (156 aa)). Residues 524-631 (KEKTREQQRK…AAAKQEKDGE (108 aa)) adopt a coiled-coil conformation. Basic and acidic residues-rich tracts occupy residues 535 to 553 (ALEEEKSGVKKQDKSEEFK), 563 to 576 (SAKHEKEDDRVERR), 583 to 618 (RDAEATSKMTDDEKVKQMELNDLIAEVRRQNREKAA), and 625 to 637 (KQEKDGEFKGFDD). The tract at residues 535-637 (ALEEEKSGVK…KDGEFKGFDD (103 aa)) is disordered.

This sequence belongs to the DEAD box helicase family. DDX55/SPB4 subfamily. Component of pre-60S ribosomal complexes.

The protein localises to the nucleus. It is found in the nucleolus. It catalyses the reaction ATP + H2O = ADP + phosphate + H(+). In terms of biological role, ATP-binding RNA helicase involved in the biogenesis of 60S ribosomal subunits. Binds 90S pre-ribosomal particles and dissociates from pre-60S ribosomal particles after processing of 27SB pre-rRNA. Required for the normal formation of 18S rRNA through the processing of pre-rRNAs at sites A0, A1 and A2, and the normal formation of 25S and 5.8S rRNAs through the processing of pre-rRNAs at sites C1 and C2. In Gibberella zeae (strain ATCC MYA-4620 / CBS 123657 / FGSC 9075 / NRRL 31084 / PH-1) (Wheat head blight fungus), this protein is ATP-dependent rRNA helicase SPB4.